A 76-amino-acid chain; its full sequence is Exodeoxyribonuclease 7 small subunit (76 aa).

Belongs to the XseB family. In terms of assembly, heterooligomer composed of large and small subunits.

It localises to the cytoplasm. It carries out the reaction Exonucleolytic cleavage in either 5'- to 3'- or 3'- to 5'-direction to yield nucleoside 5'-phosphates.. Bidirectionally degrades single-stranded DNA into large acid-insoluble oligonucleotides, which are then degraded further into small acid-soluble oligonucleotides. This chain is Exodeoxyribonuclease 7 small subunit, found in Legionella pneumophila (strain Paris).